Reading from the N-terminus, the 396-residue chain is F-box protein At2g21930 (396 aa).

In terms of domain architecture, F-box spans S19 to Y65.

The protein is F-box protein At2g21930 of Arabidopsis thaliana (Mouse-ear cress).